The primary structure comprises 345 residues: Holliday junction branch migration complex subunit RuvB (345 aa).

The segment at 4-182 (PDRIVSAVQR…FGIPIRLEFY (179 aa)) is large ATPase domain (RuvB-L). ATP-binding positions include R22, G63, K66, T67, T68, 129–131 (EDY), R172, Y182, and R219. T67 lines the Mg(2+) pocket. The interval 183-253 (TVDELQAIVT…IADAALSRLE (71 aa)) is small ATPAse domain (RuvB-S). The head domain (RuvB-H) stretch occupies residues 256-345 (ALGLDQLDRR…QSQINLFEEE (90 aa)). The DNA site is built by R292, R311, and R316.

Belongs to the RuvB family. As to quaternary structure, homohexamer. Forms an RuvA(8)-RuvB(12)-Holliday junction (HJ) complex. HJ DNA is sandwiched between 2 RuvA tetramers; dsDNA enters through RuvA and exits via RuvB. An RuvB hexamer assembles on each DNA strand where it exits the tetramer. Each RuvB hexamer is contacted by two RuvA subunits (via domain III) on 2 adjacent RuvB subunits; this complex drives branch migration. In the full resolvosome a probable DNA-RuvA(4)-RuvB(12)-RuvC(2) complex forms which resolves the HJ.

Its subcellular location is the cytoplasm. It catalyses the reaction ATP + H2O = ADP + phosphate + H(+). The RuvA-RuvB-RuvC complex processes Holliday junction (HJ) DNA during genetic recombination and DNA repair, while the RuvA-RuvB complex plays an important role in the rescue of blocked DNA replication forks via replication fork reversal (RFR). RuvA specifically binds to HJ cruciform DNA, conferring on it an open structure. The RuvB hexamer acts as an ATP-dependent pump, pulling dsDNA into and through the RuvAB complex. RuvB forms 2 homohexamers on either side of HJ DNA bound by 1 or 2 RuvA tetramers; 4 subunits per hexamer contact DNA at a time. Coordinated motions by a converter formed by DNA-disengaged RuvB subunits stimulates ATP hydrolysis and nucleotide exchange. Immobilization of the converter enables RuvB to convert the ATP-contained energy into a lever motion, pulling 2 nucleotides of DNA out of the RuvA tetramer per ATP hydrolyzed, thus driving DNA branch migration. The RuvB motors rotate together with the DNA substrate, which together with the progressing nucleotide cycle form the mechanistic basis for DNA recombination by continuous HJ branch migration. Branch migration allows RuvC to scan DNA until it finds its consensus sequence, where it cleaves and resolves cruciform DNA. The chain is Holliday junction branch migration complex subunit RuvB from Chelativorans sp. (strain BNC1).